We begin with the raw amino-acid sequence, 815 residues long: Lon protease 2 (815 aa).

The Lon N-terminal domain maps to 19 to 212; the sequence is LPVLPLINTV…RLSVVLSQEI (194 aa). 365-372 lines the ATP pocket; it reads GPPGVGKT. Residues 601–782 form the Lon proteolytic domain; the sequence is RDEIGVATGM…DEVLPIAFVS (182 aa). Active-site residues include Ser688 and Lys731.

This sequence belongs to the peptidase S16 family. Homohexamer. Organized in a ring with a central cavity.

The protein localises to the cytoplasm. The catalysed reaction is Hydrolysis of proteins in presence of ATP.. Functionally, ATP-dependent serine protease that mediates the selective degradation of mutant and abnormal proteins as well as certain short-lived regulatory proteins. Required for cellular homeostasis and for survival from DNA damage and developmental changes induced by stress. Degrades polypeptides processively to yield small peptide fragments that are 5 to 10 amino acids long. Binds to DNA in a double-stranded, site-specific manner. This chain is Lon protease 2, found in Herpetosiphon aurantiacus (strain ATCC 23779 / DSM 785 / 114-95).